We begin with the raw amino-acid sequence, 174 residues long: D(1B) dopamine receptor (174 aa).

A helical membrane pass occupies residues 1-10 (SILNLCIISV). Residues 11 to 32 (DRYWAISRPFCYERKMTQRVAL) are Cytoplasmic-facing. Residues 33-54 (VMVGLAWTLSILISFIPVQLHW) traverse the membrane as a helical segment. Over 55-96 (HRDKVGSRDGLDPPSNLANGTPWEEAGESDRSAENCDSSLNR) the chain is Extracellular. The tract at residues 64 to 88 (GLDPPSNLANGTPWEEAGESDRSAE) is disordered. Asn95 is a glycosylation site (N-linked (GlcNAc...) asparagine). The helical transmembrane segment at 97–119 (TYAISSSLISFYIPVAIMIVTYT) threads the bilayer. Residues 120-169 (RIYRIAQVQIRRISSLERAAEHAQSCRSREACAPDSGLRASIKKETKVLK) are Cytoplasmic-facing. A helical transmembrane segment spans residues 170–174 (TLSVI).

This sequence belongs to the G-protein coupled receptor 1 family.

The protein resides in the cell membrane. Dopamine receptor whose activity is mediated by G proteins which activate adenylyl cyclase. This chain is D(1B) dopamine receptor (DRD5), found in Bos taurus (Bovine).